The following is a 1782-amino-acid chain: Atrochrysone carboxylic acid synthase (1782 aa).

The interval 41–270 is N-terminal acylcarrier protein transacylase domain (SAT); it reads HTYTKDRRYP…ALPVYGGLCH (230 aa). The 435-residue stretch at 407 to 841 folds into the Ketosynthase family 3 (KS3) domain; that stretch reads QSKIAIVGMS…GGNSTLAIEE (435 aa). Catalysis depends on for beta-ketoacyl synthase activity residues Cys-580, His-716, and His-759. Residues 946-1266 form a malonyl-CoA:ACP transacylase (MAT) domain region; the sequence is FAFTGQGSSY…LGILHCAGVP (321 aa). The product template (PT) domain stretch occupies residues 1331-1648; sequence TSTVQQIIHE…RILLNRFFSA (318 aa). Residues 1335–1468 are N-terminal hotdog fold; that stretch reads QQIIHEQYDG…ATVYYEEASD (134 aa). The 309-residue stretch at 1335–1643 folds into the PKS/mFAS DH domain; sequence QQIIHEQYDG…FRRYPRILLN (309 aa). Residue His-1367 is the Proton acceptor; for dehydratase activity of the active site. The segment at 1495–1643 is C-terminal hotdog fold; sequence VANRFTRRMA…FRRYPRILLN (149 aa). Catalysis depends on Asp-1554, which acts as the Proton donor; for dehydratase activity. Positions 1653-1703 are disordered; it reads ARKSTPATSAPAPAPPAGSEALQPKAAPASTPAAPASADAPTTNGVKAAAE. Residues 1678–1695 are compositionally biased toward low complexity; it reads AAPASTPAAPASADAPTT. Positions 1704 to 1781 constitute a Carrier domain; the sequence is PDANSTAAKA…DLKSWLLEYY (78 aa). Ser-1741 is subject to O-(pantetheine 4'-phosphoryl)serine.

As to expression, specifically expressed in conidia.

The enzyme catalyses holo-[ACP] + 8 malonyl-CoA + 8 H(+) = atrochrysone carboxyl-[ACP] + 8 CO2 + 8 CoA + 2 H2O. It functions in the pathway secondary metabolite biosynthesis. Its function is as follows. Non-reducing polyketide synthase; part of the gene cluster that mediates the biosynthesis of trypacidin, a mycotoxin with antiprotozoal activity and that plays a role in the infection process. The pathway begins with the synthesis of atrochrysone thioester by the polyketide synthase (PKS) tpcC. The atrochrysone carboxyl ACP thioesterase tpcB then breaks the thioester bond and releases the atrochrysone carboxylic acid from tpcC. The decarboxylase tpcK converts atrochrysone carboxylic acid to atrochrysone which is further reduced into emodin anthrone. The next step is performed by the emodin anthrone oxygenase tpcL that catalyzes the oxidation of emodin anthrone to emodin. Emodin O-methyltransferase encoded by tpcA catalyzes methylation of the 8-hydroxy group of emodin to form questin. Ring cleavage of questin by questin oxidase tpcI leads to desmethylsulochrin via several intermediates including questin epoxide. Another methylation step catalyzed by tpcM leads to the formation of sulochrin which is further converted to monomethylsulfochrin by tpcH. Finally, the tpcJ catalyzes the conversion of monomethylsulfochrin to trypacidin. Trypacidin is toxic for human pulmonary and bronchial epithelial cells by initiating the intracellular formation of nitric oxide (NO) and hydrogen peroxide (H(2)O(2)), thus triggering host necrotic cell death. The trypacidin pathway is also able to produce endocrocin via a distinct route from the endocrocin Enc pathway. This chain is Atrochrysone carboxylic acid synthase, found in Aspergillus fumigatus (strain ATCC MYA-4609 / CBS 101355 / FGSC A1100 / Af293) (Neosartorya fumigata).